The sequence spans 710 residues: Denticleless protein homolog A (710 aa).

3 WD repeats span residues 47-89, 96-135, and 138-178; these read GMPV…MQRL, AHTN…LIGE, and GHQC…KDGF. The short motif at 168–171 is the DDB1-binding motif element; it reads WDTR. The Nuclear localization signal motif lies at 197-204; the sequence is PSKMKKRK. WD repeat units lie at residues 215-254, 270-309, 314-355, and 359-398; these read DSQQ…SAYR, TRKL…TDPV, GHQN…AAPV, and GHCQ…CEDS. The short motif at 244–247 is the DDB1-binding motif element; that stretch reads WDLR. Disordered regions lie at residues 428–534 and 652–698; these read GKPS…VSSA and ALGH…PGSM. Positions 430–450 are enriched in low complexity; it reads PSVMSSSSLTSSPTPASCAPS. Composition is skewed to polar residues over residues 504-516 and 659-690; these read TPKS…TKTP and SSPQ…SPVS.

It belongs to the WD repeat cdt2 family. Component of the DCX(DTL) E3 ubiquitin ligase complex, at least composed of cul4 (cul4a or cul4b), ddb1, dtl/cdt2 and rbx1.

The protein localises to the nucleus. The protein resides in the cytoplasm. It localises to the cytoskeleton. Its subcellular location is the microtubule organizing center. It is found in the centrosome. The protein localises to the chromosome. The protein operates within protein modification; protein ubiquitination. Functionally, substrate-specific adapter of a DCX (DDB1-CUL4-X-box) E3 ubiquitin-protein ligase complex required for cell cycle control, DNA damage response and translesion DNA synthesis. The DCX(DTL) complex, also named CRL4(CDT2) complex, mediates the polyubiquitination and subsequent degradation of CDT1, CDKN1A/p21(CIP1), KMT5A and SDE2. CDT1 degradation in response to DNA damage is necessary to ensure proper cell cycle regulation of DNA replication. CDKN1A/p21(CIP1) degradation during S phase or following UV irradiation is essential to control replication licensing. KMT5A degradation is also important for a proper regulation of mechanisms such as TGF-beta signaling, cell cycle progression, DNA repair and cell migration. Most substrates require their interaction with PCNA for their polyubiquitination: substrates interact with PCNA via their PIP-box, and those containing the 'K+4' motif in the PIP box, recruit the DCX(DTL) complex, leading to their degradation. In undamaged proliferating cells, the DCX(DTL) complex also promotes the 'Lys-164' monoubiquitination of PCNA, thereby being involved in PCNA-dependent translesion DNA synthesis. May play a role in the regulation of the circadian clock. This is Denticleless protein homolog A (dtl-a) from Xenopus laevis (African clawed frog).